A 332-amino-acid polypeptide reads, in one-letter code: DnAJ-like protein slr0093 (332 aa).

The J domain maps to F6–Y75.

This is DnAJ-like protein slr0093 from Synechocystis sp. (strain ATCC 27184 / PCC 6803 / Kazusa).